The following is a 417-amino-acid chain: Gamma-glutamyl phosphate reductase (417 aa).

The protein belongs to the gamma-glutamyl phosphate reductase family.

The protein resides in the cytoplasm. The enzyme catalyses L-glutamate 5-semialdehyde + phosphate + NADP(+) = L-glutamyl 5-phosphate + NADPH + H(+). It participates in amino-acid biosynthesis; L-proline biosynthesis; L-glutamate 5-semialdehyde from L-glutamate: step 2/2. Its function is as follows. Catalyzes the NADPH-dependent reduction of L-glutamate 5-phosphate into L-glutamate 5-semialdehyde and phosphate. The product spontaneously undergoes cyclization to form 1-pyrroline-5-carboxylate. The sequence is that of Gamma-glutamyl phosphate reductase from Haemophilus influenzae (strain PittEE).